We begin with the raw amino-acid sequence, 275 residues long: Phage-like element PBSX protein XkdF (275 aa).

The disordered stretch occupies residues 247-275 (KARGASKQTADDTGGNTEQVKKSIWSGLL).

This sequence to B.subtilis YqbD.

The protein is Phage-like element PBSX protein XkdF (xkdF) of Bacillus subtilis (strain 168).